The following is a 365-amino-acid chain: Putative glutamate--cysteine ligase 2-2 (365 aa).

It belongs to the glutamate--cysteine ligase type 2 family. YbdK subfamily.

It carries out the reaction L-cysteine + L-glutamate + ATP = gamma-L-glutamyl-L-cysteine + ADP + phosphate + H(+). Functionally, ATP-dependent carboxylate-amine ligase which exhibits weak glutamate--cysteine ligase activity. The protein is Putative glutamate--cysteine ligase 2-2 of Mycolicibacterium vanbaalenii (strain DSM 7251 / JCM 13017 / BCRC 16820 / KCTC 9966 / NRRL B-24157 / PYR-1) (Mycobacterium vanbaalenii).